Consider the following 262-residue polypeptide: ATP synthase subunit a (262 aa).

A run of 5 helical transmembrane segments spans residues V26–S46, V86–I106, D130–I150, L204–L226, and L240–A260.

Belongs to the ATPase A chain family. As to quaternary structure, F-type ATPases have 2 components, CF(1) - the catalytic core - and CF(0) - the membrane proton channel. CF(1) has five subunits: alpha(3), beta(3), gamma(1), delta(1), epsilon(1). CF(0) has three main subunits: a(1), b(2) and c(9-12). The alpha and beta chains form an alternating ring which encloses part of the gamma chain. CF(1) is attached to CF(0) by a central stalk formed by the gamma and epsilon chains, while a peripheral stalk is formed by the delta and b chains.

The protein resides in the cell inner membrane. In terms of biological role, key component of the proton channel; it plays a direct role in the translocation of protons across the membrane. This is ATP synthase subunit a from Haemophilus influenzae (strain 86-028NP).